Here is a 735-residue protein sequence, read N- to C-terminus: Diacylglycerol kinase alpha (735 aa).

EF-hand domains lie at 110–145 (RPED…MMRV) and 155–190 (ELRP…TVPL). 9 residues coordinate Ca(2+): aspartate 123, aspartate 125, asparagine 127, glutamate 134, aspartate 168, aspartate 170, serine 172, serine 174, and glutamate 179. 2 consecutive Phorbol-ester/DAG-type zinc fingers follow at residues 205–253 (QHMW…ALPC) and 269–319 (SHVW…GHEC). In terms of domain architecture, DAGKc spans 372–506 (PNTHPLLVFV…MDRWSVEVIP (135 aa)). Lysine 484 is modified (N6-acetyllysine).

The protein belongs to the eukaryotic diacylglycerol kinase family. In terms of assembly, monomer. Expressed in lymphocytes.

Its subcellular location is the cytoplasm. It localises to the cytosol. It carries out the reaction a 1,2-diacyl-sn-glycerol + ATP = a 1,2-diacyl-sn-glycero-3-phosphate + ADP + H(+). The catalysed reaction is a 1-O-alkyl-sn-glycerol + ATP = a 1-O-alkyl-sn-glycero-3-phosphate + ADP + H(+). It catalyses the reaction 1-O-alkyl-2-acyl-sn-glycerol + ATP = 1-O-alkyl-2-acyl-sn-glycero-3-phosphate + ADP + H(+). The enzyme catalyses 1,2-dihexadecanoyl-sn-glycerol + ATP = 1,2-dihexadecanoyl-sn-glycero-3-phosphate + ADP + H(+). It carries out the reaction 1-hexadecanoyl-2-(9Z-octadecenoyl)-sn-glycerol + ATP = 1-hexadecanoyl-2-(9Z-octadecenoyl)-sn-glycero-3-phosphate + ADP + H(+). The catalysed reaction is 2-(9Z-octadecenoyl)-glycerol + ATP = 2-(9Z-octadecenoyl)-sn-glycero-3-phosphate + ADP + H(+). It catalyses the reaction 1,2-di-(9Z-octadecenoyl)-sn-glycerol + ATP = 1,2-di-(9Z-octadecenoyl)-sn-glycero-3-phosphate + ADP + H(+). The enzyme catalyses 1-octadecanoyl-2-(5Z,8Z,11Z,14Z-eicosatetraenoyl)-sn-glycerol + ATP = 1-octadecanoyl-2-(5Z,8Z,11Z,14Z-eicosatetraenoyl)-sn-glycero-3-phosphate + ADP + H(+). It carries out the reaction 1,2-didecanoyl-sn-glycerol + ATP = 1,2-didecanoyl-sn-glycero-3-phosphate + ADP + H(+). The catalysed reaction is 1-O-hexadecyl-2-acetyl-sn-glycerol + ATP = 1-O-hexadecyl-2-acetyl-sn-glycero-3-phosphate + ADP + H(+). It catalyses the reaction 1-O-hexadecyl-2-(5Z,8Z,11Z,14Z-eicosatetraenoyl)-sn-glycerol + ATP = 1-O-hexadecyl-2-(5Z,8Z,11Z,14Z-eicosatetraenoyl)-sn-glycero-3-phosphate + ADP + H(+). The enzyme catalyses 1-O-hexadecyl-2-(9Z-octadecenoyl)-sn-glycerol + ATP = 1-O-hexadecyl-2-(9Z-octadecenoyl)-sn-glycero-3-phosphate + ADP + H(+). It carries out the reaction 1-O-hexadecyl-sn-glycerol + ATP = 1-O-hexadecyl-sn-glycero-3-phosphate + ADP + H(+). It functions in the pathway lipid metabolism; glycerolipid metabolism. Stimulated by calcium and phosphatidylserine. Diacylglycerol kinase that converts diacylglycerol/DAG into phosphatidic acid/phosphatidate/PA and regulates the respective levels of these two bioactive lipids. Thereby, acts as a central switch between the signaling pathways activated by these second messengers with different cellular targets and opposite effects in numerous biological processes. Also plays an important role in the biosynthesis of complex lipids. Can also phosphorylate 1-alkyl-2-acylglycerol in vitro as efficiently as diacylglycerol provided it contains an arachidonoyl group. Also involved in the production of alkyl-lysophosphatidic acid, another bioactive lipid, through the phosphorylation of 1-alkyl-2-acetyl glycerol. This chain is Diacylglycerol kinase alpha (DGKA), found in Homo sapiens (Human).